The primary structure comprises 390 residues: ATP-sensitive inward rectifier potassium channel 11 (390 aa).

Topologically, residues 1 to 65 (MLSRKGIIPE…LQDVFTTLVD (65 aa)) are cytoplasmic. Residues asparagine 48 and arginine 50 each contribute to the ATP site. The chain crosses the membrane as a helical span at residues 66-92 (LKWPHTLLIFTMSFLCSWLLFAMAWWL). At 93–116 (IAFAHGDLAPSEGTAEPCVTSIHS) the chain is on the extracellular side. An intrachain disulfide couples cysteine 110 to cysteine 142. The discontinuously helical; Pore-forming intramembrane region spans 117–133 (FSSAFLFSIEVQVTIGF). Threonine 130 and phenylalanine 133 together coordinate K(+). Positions 130-135 (TIGFGG) match the Selectivity filter motif. Over 134–142 (GGRMVTEEC) the chain is Extracellular. A helical transmembrane segment spans residues 143-171 (PLAILILIVQNIVGLMINAIMLGCIFMKT). The Cytoplasmic portion of the chain corresponds to 172-390 (AQAHRRAETL…KFSISPDSLS (219 aa)). Arginine 176 lines the a 1,2-diacyl-sn-glycero-3-phospho-(1D-myo-inositol-4,5-bisphosphate) pocket. Residue tyrosine 330 participates in ATP binding. Residue threonine 341 is modified to Phosphothreonine; by MAPK1. At serine 385 the chain carries Phosphoserine; by MAPK1.

Belongs to the inward rectifier-type potassium channel (TC 1.A.2.1) family. KCNJ11 subfamily. As to quaternary structure, homotetramer; the homotetramer binds four ATP molecules (one ATP per subunit). Forms an heterooctamer with ABCC8/SUR1; one KCNJ11 homotetramer interacts with four ABCC8/SUR1 molecules. Interacts with ABCC9/SUR2. Phosphorylation by MAPK1 results in changes in channel gating that destabilize the closed states and reduce the ATP sensitivity.

The protein resides in the membrane. The catalysed reaction is K(+)(in) = K(+)(out). Its activity is regulated as follows. KATP channels are regulated by cytoplasmic ATP/ADP ratios; ATP inhibits the channel by closing the pore, while ADP activates the channel. Activated by phosphatidylinositol 4,5-biphosphate (PtdIns(4,5)P2). In terms of biological role, inward rectifier potassium channel that forms the pore of ATP-sensitive potassium channels (KATP), regulating potassium permeability as a function of cytoplasmic ATP and ADP concentrations in many different cells. Inward rectifier potassium channels are characterized by a greater tendency to allow potassium to flow into the cell rather than out of it. Their voltage dependence is regulated by the concentration of extracellular potassium; as external potassium is raised, the voltage range of the channel opening shifts to more positive voltages. The inward rectification is mainly due to the blockage of outward current by internal magnesium. Can be blocked by extracellular barium. In pancreatic cells, it forms KATP channels with ABCC8/SUR1. Can form cardiac and smooth muscle-type KATP channels with ABCC9. The polypeptide is ATP-sensitive inward rectifier potassium channel 11 (KCNJ11) (Homo sapiens (Human)).